The following is a 270-amino-acid chain: Non-homologous end joining protein Ku (270 aa).

The Ku domain occupies 10–194 (SLGLLNIGIK…NYPIQKQELT (185 aa)).

It belongs to the prokaryotic Ku family. Homodimer. Interacts with LigD.

Its function is as follows. With LigD forms a non-homologous end joining (NHEJ) DNA repair enzyme, which repairs dsDNA breaks with reduced fidelity. Binds linear dsDNA with 5'- and 3'- overhangs but not closed circular dsDNA nor ssDNA. Recruits and stimulates the ligase activity of LigD. The protein is Non-homologous end joining protein Ku of Bacillus thuringiensis subsp. konkukian (strain 97-27).